The primary structure comprises 93 residues: Small ribosomal subunit protein uS19 (93 aa).

It belongs to the universal ribosomal protein uS19 family.

Functionally, protein S19 forms a complex with S13 that binds strongly to the 16S ribosomal RNA. The polypeptide is Small ribosomal subunit protein uS19 (Lacticaseibacillus paracasei (strain ATCC 334 / BCRC 17002 / CCUG 31169 / CIP 107868 / KCTC 3260 / NRRL B-441) (Lactobacillus paracasei)).